We begin with the raw amino-acid sequence, 1093 residues long: Small G protein signaling modulator 1 (1093 aa).

The region spanning 36 to 190 is the RUN domain; it reads HEDSSHIISF…EYTKMKTADH (155 aa). The tract at residues 256–297 is important for interaction with RAB9A and RAB9B; that stretch reads LLYGKNNVLVQPRDDMEAVPGYLSLHQTADVMTLKWTPNQLM. The required for interaction with RAP family members stretch occupies residues 301–350; that stretch reads VGDLDYEKSVYWDYAVTIRLEEIVYLHCHQQVDSGGTVVLVSQDGIQRPP. 3 disordered regions span residues 377 to 412, 645 to 778, and 810 to 838; these read DPPLWSQRGKGKVFPKLRKRSPQGSSESTSSDKEDD, DSTI…ELAV, and DGAVMDGWPGEADKPSRADSEDNLSEEPE. Over residues 385–397 the composition is skewed to basic residues; it reads GKGKVFPKLRKRS. The Rab-GAP TBC domain occupies 562–1026; it reads GVQPEIRRAV…SVWETIWAAK (465 aa). Over residues 647–676 the composition is skewed to polar residues; the sequence is TISNESSQSCSSGRQNLRLQSDSSSSTQVF. Residues 687 to 696 are compositionally biased toward basic and acidic residues; that stretch reads AEGRSEEKHP. Over residues 702–736 the composition is skewed to polar residues; that stretch reads NPANGTCSPDSGHPSSHNFSSGLSEHSEPSLSTED. Basic and acidic residues-rich tracts occupy residues 766–776 and 820–829; these read TSRDEAPREEL and EADKPSRADS.

This sequence belongs to the RUTBC family. As to quaternary structure, interacts with RAB9A (GTP-bound form) and RAB9B. Interacts with RAB3A, RAB4A, RAB5A, RAB8A, RAB11A, RAP1A, RAP1B, RAP2A and RAP2B. No interaction with RAB27A. As to expression, expressed only in brain.

It is found in the golgi apparatus. It localises to the trans-Golgi network. The protein resides in the cytoplasm. The protein localises to the cytoplasmic vesicle membrane. Interacts with numerous Rab family members, functioning as Rab effector for some, and as GTPase activator for others. Promotes GTP hydrolysis by RAB34 and RAB36. Probably functions as a GTPase effector with RAB9A and RAB9B; does not stimulate GTP hydrolysis with RAB9A and RAB9B. In Mus musculus (Mouse), this protein is Small G protein signaling modulator 1 (Sgsm1).